Consider the following 365-residue polypeptide: 3-isopropylmalate dehydrogenase (365 aa).

80–93 (GPKWADNTGDQRPE) contacts NAD(+). R100, R110, R138, and D223 together coordinate substrate. Positions 223, 247, and 251 each coordinate Mg(2+). Residue 280-292 (GSAPDIAGQDVAN) coordinates NAD(+). Residues 337–365 (NEEDASTSAFGREVATRAADSVPQNAPTP) are disordered.

It belongs to the isocitrate and isopropylmalate dehydrogenases family. LeuB type 1 subfamily. Homodimer. Requires Mg(2+) as cofactor. It depends on Mn(2+) as a cofactor.

Its subcellular location is the cytoplasm. The catalysed reaction is (2R,3S)-3-isopropylmalate + NAD(+) = 4-methyl-2-oxopentanoate + CO2 + NADH. It functions in the pathway amino-acid biosynthesis; L-leucine biosynthesis; L-leucine from 3-methyl-2-oxobutanoate: step 3/4. In terms of biological role, catalyzes the oxidation of 3-carboxy-2-hydroxy-4-methylpentanoate (3-isopropylmalate) to 3-carboxy-4-methyl-2-oxopentanoate. The product decarboxylates to 4-methyl-2 oxopentanoate. The sequence is that of 3-isopropylmalate dehydrogenase from Salinibacter ruber (strain DSM 13855 / M31).